The following is a 200-amino-acid chain: ATP-dependent Clp protease proteolytic subunit (200 aa).

Ser-101 functions as the Nucleophile in the catalytic mechanism. Residue His-126 is part of the active site.

Belongs to the peptidase S14 family. Component of the chloroplastic Clp protease core complex.

The protein localises to the plastid. It localises to the chloroplast stroma. It catalyses the reaction Hydrolysis of proteins to small peptides in the presence of ATP and magnesium. alpha-casein is the usual test substrate. In the absence of ATP, only oligopeptides shorter than five residues are hydrolyzed (such as succinyl-Leu-Tyr-|-NHMec, and Leu-Tyr-Leu-|-Tyr-Trp, in which cleavage of the -Tyr-|-Leu- and -Tyr-|-Trp bonds also occurs).. Functionally, cleaves peptides in various proteins in a process that requires ATP hydrolysis. Has a chymotrypsin-like activity. Plays a major role in the degradation of misfolded proteins. The polypeptide is ATP-dependent Clp protease proteolytic subunit (Ostreococcus tauri).